Reading from the N-terminus, the 750-residue chain is Alpha-galactosidase C (750 aa).

Positions 1–26 (MFRSTATVAAATAMGLLTATGHGSLA) are cleaved as a signal peptide. N-linked (GlcNAc...) asparagine glycans are attached at residues asparagine 58, asparagine 162, asparagine 186, asparagine 194, asparagine 366, asparagine 428, asparagine 432, and asparagine 453. Aspartate 511 acts as the Nucleophile in catalysis. Aspartate 573 functions as the Proton donor in the catalytic mechanism.

It belongs to the glycosyl hydrolase 36 family. In terms of assembly, homotetramer. The cofactor is Mg(2+). Requires NAD(+) as cofactor.

It is found in the secreted. It carries out the reaction Hydrolysis of terminal, non-reducing alpha-D-galactose residues in alpha-D-galactosides, including galactose oligosaccharides, galactomannans and galactolipids.. Its function is as follows. Hydrolyzes a variety of simple alpha-D-galactoside as well as more complex molecules such as oligosaccharides and polysaccharides. Active on paranitrophenyl-alpha-galactoside, raffinose, locust bean gum and gum guar. This Emericella nidulans (strain FGSC A4 / ATCC 38163 / CBS 112.46 / NRRL 194 / M139) (Aspergillus nidulans) protein is Alpha-galactosidase C (aglC).